The sequence spans 261 residues: uncharacterized protein (261 aa).

This sequence belongs to the PaiB family.

This is an uncharacterized protein from Aspergillus fumigatus (strain ATCC MYA-4609 / CBS 101355 / FGSC A1100 / Af293) (Neosartorya fumigata).